The primary structure comprises 405 residues: Deoxyguanosinetriphosphate triphosphohydrolase-like protein (405 aa).

The HD domain maps to 75–219 (RLTHTIEVAQ…AAVADDIAYN (145 aa)).

The protein belongs to the dGTPase family. Type 2 subfamily.

This Allorhizobium ampelinum (strain ATCC BAA-846 / DSM 112012 / S4) (Agrobacterium vitis (strain S4)) protein is Deoxyguanosinetriphosphate triphosphohydrolase-like protein.